A 427-amino-acid polypeptide reads, in one-letter code: Trigger factor (427 aa).

One can recognise a PPIase FKBP-type domain in the interval 163–248; that stretch reads GDTVVIDFVG…IHEVKAKEVP (86 aa).

The protein belongs to the FKBP-type PPIase family. Tig subfamily.

It is found in the cytoplasm. It catalyses the reaction [protein]-peptidylproline (omega=180) = [protein]-peptidylproline (omega=0). Its function is as follows. Involved in protein export. Acts as a chaperone by maintaining the newly synthesized protein in an open conformation. Functions as a peptidyl-prolyl cis-trans isomerase. This Streptococcus mutans serotype c (strain ATCC 700610 / UA159) protein is Trigger factor.